The following is a 545-amino-acid chain: MDFKRLTAFFAIALVIMIGWEKMFPTPKPVPAPQQAAQKQAATASAEAALAPATPITVTTDTVQAVIDEKSGDLRRLTLLKYKATGDENKPFVLFGDGKEYTYVAQSELLDAQGNNILKGIGFSAPKKQYTLNGDTVEVRLSAPETNGLKIDKVYTFTKDSYLVNVRFDIANGSGQTANLSADYRIVRDHSEPEGQGYFTHSYVGPVVYTPEGNFQKVSFSDLDDDAKSGKSEAEYIRKTPTGWLGMIEHHFMSTWILQPKGGQSVCAAGDCHIDIKRRSDKLYSASVSVPLAAIQAGAKAETAVNLYAGPQTTSVIANIADNLQLAKDYGKVHWFASPLFWLLNQLHNIIGNWGWAIVVLTIIVKAVLYPLTNASYRSMAKMRAAAPKLQTIKEKYGDDRMAQQQAMMQLYKDEKINPLGGCLPMLLQIPVFIGLYWALFASVELRQAPWLGWITDLSRADPYYILPIIMAATMFAQTYLNPPPTDPMQAKMMKIMPLVFSVMFFFFPAGLVLYWVVNNLLTIAQQWHINRSIEKQRAQGEVVS.

4 helical membrane passes run 350–370 (IIGN…AVLY), 424–444 (LPML…FASV), 461–481 (ADPY…QTYL), and 498–518 (PLVF…YWVV).

This sequence belongs to the OXA1/ALB3/YidC family. Type 1 subfamily. As to quaternary structure, interacts with the Sec translocase complex via SecD. Specifically interacts with transmembrane segments of nascent integral membrane proteins during membrane integration.

Its subcellular location is the cell inner membrane. Required for the insertion and/or proper folding and/or complex formation of integral membrane proteins into the membrane. Involved in integration of membrane proteins that insert both dependently and independently of the Sec translocase complex, as well as at least some lipoproteins. Aids folding of multispanning membrane proteins. In Neisseria gonorrhoeae (strain NCCP11945), this protein is Membrane protein insertase YidC.